A 218-amino-acid polypeptide reads, in one-letter code: Cytochrome b6 (218 aa).

The chain crosses the membrane as a helical span at residues 35-55; it reads IFYCLGGITLVCFLVQFATGF. Cys38 provides a ligand contact to heme c. Residues His89 and His103 each contribute to the heme b site. Helical transmembrane passes span 93–113, 119–139, and 189–209; these read ASMM…TGGF, LTWV…VTGY, and LHTF…FLMI. The heme b site is built by His190 and His205.

Belongs to the cytochrome b family. PetB subfamily. The 4 large subunits of the cytochrome b6-f complex are cytochrome b6, subunit IV (17 kDa polypeptide, PetD), cytochrome f and the Rieske protein, while the 4 small subunits are PetG, PetL, PetM and PetN. The complex functions as a dimer. It depends on heme b as a cofactor. Requires heme c as cofactor.

It is found in the cellular thylakoid membrane. In terms of biological role, component of the cytochrome b6-f complex, which mediates electron transfer between photosystem II (PSII) and photosystem I (PSI), cyclic electron flow around PSI, and state transitions. In Prochlorococcus marinus (strain MIT 9303), this protein is Cytochrome b6.